Consider the following 239-residue polypeptide: 4-hydroxy-tetrahydrodipicolinate reductase (239 aa).

NAD(+) is bound by residues 12-17 (GASGRM), 94-96 (GTT), and 118-121 (ASNF). The Proton donor/acceptor role is filled by His150. (S)-2,3,4,5-tetrahydrodipicolinate is bound at residue His151. The active-site Proton donor is the Lys154. Residue 160–161 (GT) participates in (S)-2,3,4,5-tetrahydrodipicolinate binding.

Belongs to the DapB family.

The protein localises to the cytoplasm. The enzyme catalyses (S)-2,3,4,5-tetrahydrodipicolinate + NAD(+) + H2O = (2S,4S)-4-hydroxy-2,3,4,5-tetrahydrodipicolinate + NADH + H(+). The catalysed reaction is (S)-2,3,4,5-tetrahydrodipicolinate + NADP(+) + H2O = (2S,4S)-4-hydroxy-2,3,4,5-tetrahydrodipicolinate + NADPH + H(+). It functions in the pathway amino-acid biosynthesis; L-lysine biosynthesis via DAP pathway; (S)-tetrahydrodipicolinate from L-aspartate: step 4/4. Its function is as follows. Catalyzes the conversion of 4-hydroxy-tetrahydrodipicolinate (HTPA) to tetrahydrodipicolinate. This is 4-hydroxy-tetrahydrodipicolinate reductase from Stenotrophomonas maltophilia (strain K279a).